Here is a 231-residue protein sequence, read N- to C-terminus: Small ribosomal subunit protein bS18c (231 aa).

Disordered regions lie at residues 1-31 and 95-231; these read MEKS…PIES and QKEE…TRKK. A compositionally biased stretch (basic residues) spans 9–26; that stretch reads IKKKRPFRKKKRSFRKRR. Composition is skewed to basic and acidic residues over residues 95-151, 159-169, and 212-231; these read QKEE…EFQR, TNEKQTNEKQT, and TNEK…TRKK.

The protein belongs to the bacterial ribosomal protein bS18 family. In terms of assembly, part of the 30S ribosomal subunit.

The protein resides in the plastid. The protein localises to the chloroplast. This chain is Small ribosomal subunit protein bS18c, found in Jasminum nudiflorum (Winter jasmine).